Here is a 371-residue protein sequence, read N- to C-terminus: MASVQLQNVTKAWGEVVVSKDINLDIHEGEFVVFVGPSGCGKSTLLRMIAGLETITSGDLFIGEKRMNDTPPAERGVGMVFQSYALYPHLSVAENMSFGLKLAGAKKEVINQRVNQVAEVLQLAHLLDRKPKALSGGQRQRVAIGRTLVAEPSVFLLDEPLSNLDAALRVQMRIEISRLHKRLGRTMIYVTHDQVEAMTLADKIVVLDAGRVAQVGKPLELYHYPADRFVAGFIGSPKMNFLPVKVTATAIDQVQVELPMPNRQQVWLPVESRDVQVGANMSLGIRPEHLLPSDIADVILEGEVQVVEQLGNETQIHIQIPSIRQNLVYRQNDVVLVEEGATFAIGLPPERCHLFREDGTACRRLHKEPGV.

The region spanning 4-234 (VQLQNVTKAW…PADRFVAGFI (231 aa)) is the ABC transporter domain. Residue 36–43 (GPSGCGKS) coordinates ATP.

This sequence belongs to the ABC transporter superfamily. Maltooligosaccharide importer (TC 3.A.1.1.1) family. The complex is composed of two ATP-binding proteins (MalK), two transmembrane proteins (MalG and MalK) and a solute-binding protein (MalE).

The protein resides in the cell inner membrane. The catalysed reaction is D-maltose(out) + ATP + H2O = D-maltose(in) + ADP + phosphate + H(+). Functionally, part of the ABC transporter complex MalEFGK involved in maltose/maltodextrin import. Responsible for energy coupling to the transport system. This is Maltose/maltodextrin import ATP-binding protein MalK from Escherichia coli O157:H7.